The following is a 432-amino-acid chain: NADH-quinone oxidoreductase subunit D (432 aa).

Belongs to the complex I 49 kDa subunit family. In terms of assembly, NDH-1 is composed of 14 different subunits. Subunits NuoB, C, D, E, F, and G constitute the peripheral sector of the complex.

Its subcellular location is the cell membrane. The catalysed reaction is a quinone + NADH + 5 H(+)(in) = a quinol + NAD(+) + 4 H(+)(out). Functionally, NDH-1 shuttles electrons from NADH, via FMN and iron-sulfur (Fe-S) centers, to quinones in the respiratory chain. The immediate electron acceptor for the enzyme in this species is believed to be a menaquinone. Couples the redox reaction to proton translocation (for every two electrons transferred, four hydrogen ions are translocated across the cytoplasmic membrane), and thus conserves the redox energy in a proton gradient. This chain is NADH-quinone oxidoreductase subunit D, found in Mycobacterium marinum (strain ATCC BAA-535 / M).